Here is a 420-residue protein sequence, read N- to C-terminus: Pre-mRNA-splicing factor RBM22 (420 aa).

Residue Ala2 is modified to N-acetylalanine. Phosphoserine is present on residues Ser4 and Ser102. Residues Lys139 and Lys149 each participate in a glycyl lysine isopeptide (Lys-Gly) (interchain with G-Cter in SUMO2) cross-link. The segment at 159–186 (RNRPHICSFWVKGECKRGEECPYRHEKP) adopts a C3H1-type zinc-finger fold. Lys212 carries the N6-acetyllysine modification. Residues 232 to 305 (TTLYVGGLGD…RRLNVKWGRS (74 aa)) enclose the RRM domain. Residue Lys290 forms a Glycyl lysine isopeptide (Lys-Gly) (interchain with G-Cter in SUMO2) linkage. 2 disordered regions span residues 303 to 343 (GRSQ…AAEE) and 372 to 420 (APPP…HSSP). Positions 309 to 318 (RGKEKEKDGT) are enriched in basic and acidic residues.

This sequence belongs to the SLT11 family. As to quaternary structure, component of the pre-catalytic and catalytic spliceosome complexes. Component of the postcatalytic spliceosome P complex. Interacts with PDCD6; the interaction induces translocation of PDCD6 in the cytoplasm. Interacts with PPIL1.

It localises to the nucleus. It is found in the cytoplasm. Its function is as follows. Required for pre-mRNA splicing as component of the activated spliceosome. Involved in the first step of pre-mRNA splicing. Binds directly to the internal stem-loop (ISL) domain of the U6 snRNA and to the pre-mRNA intron near the 5' splice site during the activation and catalytic phases of the spliceosome cycle. Involved in both translocations of the nuclear SLU7 to the cytoplasm and the cytosolic calcium-binding protein PDCD6 to the nucleus upon cellular stress responses. The chain is Pre-mRNA-splicing factor RBM22 (RBM22) from Homo sapiens (Human).